The chain runs to 497 residues: Carboxylesterase (497 aa).

Ser185 serves as the catalytic Acyl-ester intermediate. Active-site charge relay system residues include Glu319 and His415.

The protein belongs to the type-B carboxylesterase/lipase family.

Its subcellular location is the secreted. It carries out the reaction a carboxylic ester + H2O = an alcohol + a carboxylate + H(+). The polypeptide is Carboxylesterase (Thermobifida fusca (Thermomonospora fusca)).